A 301-amino-acid chain; its full sequence is Elongation factor Ts (301 aa).

An involved in Mg(2+) ion dislocation from EF-Tu region spans residues 82–85 (TDFV).

This sequence belongs to the EF-Ts family.

It localises to the cytoplasm. Its function is as follows. Associates with the EF-Tu.GDP complex and induces the exchange of GDP to GTP. It remains bound to the aminoacyl-tRNA.EF-Tu.GTP complex up to the GTP hydrolysis stage on the ribosome. This Hyphomonas neptunium (strain ATCC 15444) protein is Elongation factor Ts.